The chain runs to 258 residues: Ubiquinone/menaquinone biosynthesis C-methyltransferase UbiE (258 aa).

The tract at residues 1-21 (MPESRTSADGGMETSYGFREV) is disordered. Residues T81, D102, and 130 to 131 (NA) each bind S-adenosyl-L-methionine.

Belongs to the class I-like SAM-binding methyltransferase superfamily. MenG/UbiE family.

The catalysed reaction is a 2-demethylmenaquinol + S-adenosyl-L-methionine = a menaquinol + S-adenosyl-L-homocysteine + H(+). The enzyme catalyses a 2-methoxy-6-(all-trans-polyprenyl)benzene-1,4-diol + S-adenosyl-L-methionine = a 5-methoxy-2-methyl-3-(all-trans-polyprenyl)benzene-1,4-diol + S-adenosyl-L-homocysteine + H(+). It participates in quinol/quinone metabolism; menaquinone biosynthesis; menaquinol from 1,4-dihydroxy-2-naphthoate: step 2/2. Its pathway is cofactor biosynthesis; ubiquinone biosynthesis. In terms of biological role, methyltransferase required for the conversion of demethylmenaquinol (DMKH2) to menaquinol (MKH2) and the conversion of 2-polyprenyl-6-methoxy-1,4-benzoquinol (DDMQH2) to 2-polyprenyl-3-methyl-6-methoxy-1,4-benzoquinol (DMQH2). In Rhizobium leguminosarum bv. trifolii (strain WSM2304), this protein is Ubiquinone/menaquinone biosynthesis C-methyltransferase UbiE.